A 66-amino-acid chain; its full sequence is UPF0370 protein YpfN (66 aa).

A helical membrane pass occupies residues 4-24 (LAKYWWILVIVFLVGVLLNVI). A disordered region spans residues 39–66 (KPELPPHRDFNDKWDDDDDWPKKDQPKK). A compositionally biased stretch (basic and acidic residues) spans 42 to 51 (LPPHRDFNDK).

Belongs to the UPF0370 family.

It is found in the cell membrane. In Escherichia coli O139:H28 (strain E24377A / ETEC), this protein is UPF0370 protein YpfN.